We begin with the raw amino-acid sequence, 211 residues long: Protein-methionine-sulfoxide reductase heme-binding subunit MsrQ (211 aa).

Transmembrane regions (helical) follow at residues 10–30 (WLKV…VWAI), 82–102 (LWCF…ELGV), 116–136 (PYLT…FTST), 153–173 (FVYL…KIIS), and 178–198 (IYAG…LSLF).

The protein belongs to the MsrQ family. Heterodimer of a catalytic subunit (MsrP) and a heme-binding subunit (MsrQ). It depends on FMN as a cofactor. The cofactor is heme b.

Its subcellular location is the cell inner membrane. Functionally, part of the MsrPQ system that repairs oxidized periplasmic proteins containing methionine sulfoxide residues (Met-O), using respiratory chain electrons. Thus protects these proteins from oxidative-stress damage caused by reactive species of oxygen and chlorine generated by the host defense mechanisms. MsrPQ is essential for the maintenance of envelope integrity under bleach stress, rescuing a wide series of structurally unrelated periplasmic proteins from methionine oxidation, including the primary periplasmic chaperone SurA and the lipoprotein Pal. MsrQ provides electrons for reduction to the reductase catalytic subunit MsrP, using the quinone pool of the respiratory chain. The polypeptide is Protein-methionine-sulfoxide reductase heme-binding subunit MsrQ (Escherichia coli (strain 55989 / EAEC)).